We begin with the raw amino-acid sequence, 59 residues long: U-myrmeciitoxin(01)-Mg5b (59 aa).

An N-terminal signal peptide occupies residues M1 to A21. Positions S22–G38 are excised as a propeptide.

In terms of tissue distribution, expressed by the venom gland.

The protein localises to the secreted. In terms of biological role, may have antimicrobial properties, like most ant linear peptides. The sequence is that of U-myrmeciitoxin(01)-Mg5b from Myrmecia gulosa (Red bulldog ant).